Here is a 241-residue protein sequence, read N- to C-terminus: Pyridoxine 5'-phosphate synthase (241 aa).

Asn7 contributes to the 3-amino-2-oxopropyl phosphate binding site. 9–10 is a 1-deoxy-D-xylulose 5-phosphate binding site; the sequence is DH. Arg18 is a binding site for 3-amino-2-oxopropyl phosphate. His43 acts as the Proton acceptor in catalysis. Arg45 and His50 together coordinate 1-deoxy-D-xylulose 5-phosphate. The active-site Proton acceptor is the Glu70. Thr100 contributes to the 1-deoxy-D-xylulose 5-phosphate binding site. The Proton donor role is filled by His191. 3-amino-2-oxopropyl phosphate is bound by residues Ser192 and 213-214; that span reads GH.

It belongs to the PNP synthase family. Homooctamer; tetramer of dimers.

It localises to the cytoplasm. The enzyme catalyses 3-amino-2-oxopropyl phosphate + 1-deoxy-D-xylulose 5-phosphate = pyridoxine 5'-phosphate + phosphate + 2 H2O + H(+). Its pathway is cofactor biosynthesis; pyridoxine 5'-phosphate biosynthesis; pyridoxine 5'-phosphate from D-erythrose 4-phosphate: step 5/5. Its function is as follows. Catalyzes the complicated ring closure reaction between the two acyclic compounds 1-deoxy-D-xylulose-5-phosphate (DXP) and 3-amino-2-oxopropyl phosphate (1-amino-acetone-3-phosphate or AAP) to form pyridoxine 5'-phosphate (PNP) and inorganic phosphate. In Nitrosomonas eutropha (strain DSM 101675 / C91 / Nm57), this protein is Pyridoxine 5'-phosphate synthase.